Here is a 190-residue protein sequence, read N- to C-terminus: Holliday junction branch migration complex subunit RuvA (190 aa).

The segment at 1 to 65 (MIGNLRGIVD…ENVTQLYGFI (65 aa)) is domain I. The domain II stretch occupies residues 66 to 143 (SKEEQQCLRL…KLEINNNHFH (78 aa)). The segment at 144 to 147 (SISE) is flexible linker. The interval 147-190 (EDALSALINLGYERTKAYDTIKKIEDESPNLDTKDIIRMALKTI) is domain III.

Belongs to the RuvA family. Homotetramer. Forms an RuvA(8)-RuvB(12)-Holliday junction (HJ) complex. HJ DNA is sandwiched between 2 RuvA tetramers; dsDNA enters through RuvA and exits via RuvB. An RuvB hexamer assembles on each DNA strand where it exits the tetramer. Each RuvB hexamer is contacted by two RuvA subunits (via domain III) on 2 adjacent RuvB subunits; this complex drives branch migration. In the full resolvosome a probable DNA-RuvA(4)-RuvB(12)-RuvC(2) complex forms which resolves the HJ.

The protein localises to the cytoplasm. Functionally, the RuvA-RuvB-RuvC complex processes Holliday junction (HJ) DNA during genetic recombination and DNA repair, while the RuvA-RuvB complex plays an important role in the rescue of blocked DNA replication forks via replication fork reversal (RFR). RuvA specifically binds to HJ cruciform DNA, conferring on it an open structure. The RuvB hexamer acts as an ATP-dependent pump, pulling dsDNA into and through the RuvAB complex. HJ branch migration allows RuvC to scan DNA until it finds its consensus sequence, where it cleaves and resolves the cruciform DNA. The chain is Holliday junction branch migration complex subunit RuvA from Wolbachia pipientis subsp. Culex pipiens (strain wPip).